The chain runs to 614 residues: tRNA uridine 5-carboxymethylaminomethyl modification enzyme MnmG (614 aa).

10 to 15 (GAGHAG) lines the FAD pocket. 271–285 (GPRYCPSIEDKIVKF) lines the NAD(+) pocket.

This sequence belongs to the MnmG family. Homodimer. Heterotetramer of two MnmE and two MnmG subunits. It depends on FAD as a cofactor.

The protein localises to the cytoplasm. Functionally, NAD-binding protein involved in the addition of a carboxymethylaminomethyl (cmnm) group at the wobble position (U34) of certain tRNAs, forming tRNA-cmnm(5)s(2)U34. This is tRNA uridine 5-carboxymethylaminomethyl modification enzyme MnmG from Ureaplasma urealyticum serovar 10 (strain ATCC 33699 / Western).